The sequence spans 72 residues: Light-harvesting polypeptide B-885 alpha-1 chain (72 aa).

The Cytoplasmic segment spans residues 1-16; sequence SAPAQWKLWLVMDPRT. Residues 17-37 form a helical membrane-spanning segment; sequence VMIGTAAWLGVLALLIHFLLL. An a bacteriochlorophyll-binding site is contributed by His-33. Over 38 to 72 the chain is Periplasmic; that stretch reads GTERFNWIDTGLKEQKATAAAQAAITPAPVTAAAK.

It belongs to the antenna complex alpha subunit family. As to quaternary structure, the core complex is formed by different alpha and beta chains, binding bacteriochlorophyll molecules, and arranged most probably in tetrameric structures disposed around the reaction center. The non-pigmented gamma chains may constitute additional components.

It localises to the cell inner membrane. Antenna complexes are light-harvesting systems, which transfer the excitation energy to the reaction centers. The sequence is that of Light-harvesting polypeptide B-885 alpha-1 chain from Rhodocyclus tenuis (Rhodospirillum tenue).